The following is a 205-amino-acid chain: Transcription termination/antitermination protein NusG (205 aa).

The 25-residue stretch at 154-178 (GDHIMVLSGPFKDFEGDVIEVSPER) folds into the KOW domain.

It belongs to the NusG family.

Its function is as follows. Participates in transcription elongation, termination and antitermination. The sequence is that of Transcription termination/antitermination protein NusG from Synechocystis sp. (strain ATCC 27184 / PCC 6803 / Kazusa).